Here is a 334-residue protein sequence, read N- to C-terminus: N-acetyl-gamma-glutamyl-phosphate reductase (334 aa).

Cys154 is an active-site residue.

Belongs to the NAGSA dehydrogenase family. Type 1 subfamily.

Its subcellular location is the cytoplasm. The catalysed reaction is N-acetyl-L-glutamate 5-semialdehyde + phosphate + NADP(+) = N-acetyl-L-glutamyl 5-phosphate + NADPH + H(+). Its pathway is amino-acid biosynthesis; L-arginine biosynthesis; N(2)-acetyl-L-ornithine from L-glutamate: step 3/4. Functionally, catalyzes the NADPH-dependent reduction of N-acetyl-5-glutamyl phosphate to yield N-acetyl-L-glutamate 5-semialdehyde. The polypeptide is N-acetyl-gamma-glutamyl-phosphate reductase (Yersinia pseudotuberculosis serotype I (strain IP32953)).